A 194-amino-acid chain; its full sequence is dITP/XTP pyrophosphatase (194 aa).

8–13 provides a ligand contact to substrate; the sequence is TKNKGK. Positions 41 and 70 each coordinate Mg(2+). The active-site Proton acceptor is the Asp70. Substrate-binding positions include Ser71, 153–156, Lys176, and 181–182; these read FGYD and HR.

This sequence belongs to the HAM1 NTPase family. Homodimer. Mg(2+) serves as cofactor.

It carries out the reaction XTP + H2O = XMP + diphosphate + H(+). The enzyme catalyses dITP + H2O = dIMP + diphosphate + H(+). The catalysed reaction is ITP + H2O = IMP + diphosphate + H(+). Functionally, pyrophosphatase that catalyzes the hydrolysis of nucleoside triphosphates to their monophosphate derivatives, with a high preference for the non-canonical purine nucleotides XTP (xanthosine triphosphate), dITP (deoxyinosine triphosphate) and ITP. Seems to function as a house-cleaning enzyme that removes non-canonical purine nucleotides from the nucleotide pool, thus preventing their incorporation into DNA/RNA and avoiding chromosomal lesions. This chain is dITP/XTP pyrophosphatase, found in Halalkalibacterium halodurans (strain ATCC BAA-125 / DSM 18197 / FERM 7344 / JCM 9153 / C-125) (Bacillus halodurans).